Reading from the N-terminus, the 278-residue chain is 4-diphosphocytidyl-2-C-methyl-D-erythritol kinase (278 aa).

K9 is a catalytic residue. 93–103 (PLGGGLGGGSS) contributes to the ATP binding site. Residue D135 is part of the active site.

The protein belongs to the GHMP kinase family. IspE subfamily.

The enzyme catalyses 4-CDP-2-C-methyl-D-erythritol + ATP = 4-CDP-2-C-methyl-D-erythritol 2-phosphate + ADP + H(+). Its pathway is isoprenoid biosynthesis; isopentenyl diphosphate biosynthesis via DXP pathway; isopentenyl diphosphate from 1-deoxy-D-xylulose 5-phosphate: step 3/6. Catalyzes the phosphorylation of the position 2 hydroxy group of 4-diphosphocytidyl-2C-methyl-D-erythritol. The sequence is that of 4-diphosphocytidyl-2-C-methyl-D-erythritol kinase from Nitrosomonas europaea (strain ATCC 19718 / CIP 103999 / KCTC 2705 / NBRC 14298).